A 284-amino-acid polypeptide reads, in one-letter code: MLSKQIPLGIYEKALPAGECWLERLQLAKTLGFDFVEMSVDETDERLSRLDWSREQRLALVNAIVETGVRVPSMCLSAHRRFPLGSEDDAVRAQGLEIMRKAIQFAQDVGIRVIQLAGYDVYYQEANNETRRRFRDGLKESVEMASRAQVTLAMEIMDYPLMNSISKALGYAHYLNNPWFQLYPDIGNLSAWDNDVQMELQAGIGHIVAVHVKDTKPGVFKNVPFGEGVVDFERCFETLKQSGYCGPYLIEMWSETAEDPAAEVAKARDWVKARMAKAGMVEAA.

The protein belongs to the L-ribulose-5-phosphate 3-epimerase family.

The catalysed reaction is L-ribulose 5-phosphate = L-xylulose 5-phosphate. It functions in the pathway cofactor degradation; L-ascorbate degradation; D-xylulose 5-phosphate from L-ascorbate: step 3/4. Catalyzes the isomerization of L-xylulose-5-phosphate to L-ribulose-5-phosphate. Is involved in the anaerobic L-ascorbate utilization. In Escherichia coli O139:H28 (strain E24377A / ETEC), this protein is L-ribulose-5-phosphate 3-epimerase UlaE.